A 278-amino-acid chain; its full sequence is Transcription initiation factor TFIID subunit 9 (278 aa).

A disordered region spans residues 193 to 278; it reads TTTKTVGSSG…EEEEFEFVTN (86 aa). Residues 200 to 210 are compositionally biased toward gly residues; it reads SSGGSGGGGGQ. Residues 231–240 show a composition bias toward low complexity; the sequence is AAAVGSIAGA. Over residues 241-259 the composition is skewed to gly residues; that stretch reads SGSGAGSASGGGGGGGSSG. Positions 269-278 are enriched in acidic residues; it reads EEEEFEFVTN.

This sequence belongs to the TAF9 family. As to quaternary structure, belongs to the TFIID complex which is composed of TATA binding protein (Tbp) and a number of TBP-associated factors (TAFs). Taf9 and Taf6 exist as a heterotetramer. Interacts with e(y)2.

It is found in the nucleus. TFIID is a multimeric protein complex that plays a central role in mediating promoter responses to various activators and repressors. This chain is Transcription initiation factor TFIID subunit 9, found in Drosophila melanogaster (Fruit fly).